Reading from the N-terminus, the 253-residue chain is 5-oxoprolinase subunit A (253 aa).

Belongs to the LamB/PxpA family. Forms a complex composed of PxpA, PxpB and PxpC.

The catalysed reaction is 5-oxo-L-proline + ATP + 2 H2O = L-glutamate + ADP + phosphate + H(+). Functionally, catalyzes the cleavage of 5-oxoproline to form L-glutamate coupled to the hydrolysis of ATP to ADP and inorganic phosphate. The chain is 5-oxoprolinase subunit A from Bacillus cereus (strain Q1).